The sequence spans 93 residues: Parbolysin P4 (93 aa).

3 disulfide bridges follow: C16-C37, C22-C33, and C47-C60.

The protein belongs to the worm cytolysin family. As to expression, localized within the skin and proboscis and are most readily isolated from body mucus secretions.

The protein resides in the secreted. Functionally, cytolysin that shows hemolytic activity (on bovine erythrocytes, HC(50)=5.75 mg/ml). This hemolytic activity is completely inhibited by small unilamelar vesicles composed of PC/PG, PC/PI and PC/PS in 1:1 molar ratios (with at least 100 mg/ml concentration). The polypeptide is Parbolysin P4 (Parborlasia corrugatus (Antarctic nemertean worm)).